The sequence spans 135 residues: Global transcriptional regulator Spx 2 (135 aa).

Cys10 is an active-site residue.

The protein belongs to the ArsC family. Spx subfamily. In terms of assembly, interacts with the C-terminal domain of the alpha subunit of the RNAP.

The protein resides in the cytoplasm. In terms of biological role, global transcriptional regulator that plays a key role in stress response and exerts either positive or negative regulation of genes. Acts by interacting with the C-terminal domain of the alpha subunit of the RNA polymerase (RNAP). This interaction can enhance binding of RNAP to the promoter region of target genes and stimulate their transcription, or block interaction of RNAP with activator. The protein is Global transcriptional regulator Spx 2 of Oceanobacillus iheyensis (strain DSM 14371 / CIP 107618 / JCM 11309 / KCTC 3954 / HTE831).